Reading from the N-terminus, the 813-residue chain is Ribonuclease R (813 aa).

An RNB domain is found at 260-587 (RVDLRDLPLV…LHRAIKYLLA (328 aa)). Lys-544 bears the N6-acetyllysine mark. One can recognise an S1 motif domain in the interval 644 to 725 (GNVFKGVISS…DERKIDFSLI (82 aa)). Residues 733–813 (NVGKTAREKA…KRAAKKKVAE (81 aa)) form a disordered region. Basic and acidic residues-rich tracts occupy residues 737–749 (TAREKAKKGDAGK) and 761–774 (VNFEPDSAFRGEKK). Over residues 775–791 (TKPKAAKKDARKAKKPS) the composition is skewed to basic residues. Residues 792–801 (AKTQKIAAAT) are compositionally biased toward low complexity. The segment covering 802–813 (KAKRAAKKKVAE) has biased composition (basic residues).

This sequence belongs to the RNR ribonuclease family. RNase R subfamily. In terms of assembly, monomer.

It is found in the cytoplasm. It carries out the reaction Exonucleolytic cleavage in the 3'- to 5'-direction to yield nucleoside 5'-phosphates.. In terms of biological role, 3'-5' exoribonuclease that releases 5'-nucleoside monophosphates and is involved in maturation of structured RNAs. Required for the expression of virulence genes on the large plasmid of S.flexneri at the post-transcriptional level. This Shigella flexneri protein is Ribonuclease R.